Here is a 280-residue protein sequence, read N- to C-terminus: Undecaprenyl-diphosphatase (280 aa).

Helical transmembrane passes span 1–21, 40–60, 89–109, 116–136, 146–166, 191–211, 227–247, and 260–280; these read MEWI…FLPI, GAAF…VFFW, WLVV…QNAI, LWIV…ADAV, LTVK…IPGV, FLLA…KIVA, LATV…LKFI, and IALG…ATLS.

This sequence belongs to the UppP family.

Its subcellular location is the cell membrane. The catalysed reaction is di-trans,octa-cis-undecaprenyl diphosphate + H2O = di-trans,octa-cis-undecaprenyl phosphate + phosphate + H(+). Catalyzes the dephosphorylation of undecaprenyl diphosphate (UPP). Confers resistance to bacitracin. The protein is Undecaprenyl-diphosphatase of Renibacterium salmoninarum (strain ATCC 33209 / DSM 20767 / JCM 11484 / NBRC 15589 / NCIMB 2235).